Reading from the N-terminus, the 124-residue chain is Large ribosomal subunit protein uL18 (124 aa).

Belongs to the universal ribosomal protein uL18 family. Part of the 50S ribosomal subunit; part of the 5S rRNA/L5/L18/L25 subcomplex. Contacts the 5S and 23S rRNAs.

Its function is as follows. This is one of the proteins that bind and probably mediate the attachment of the 5S RNA into the large ribosomal subunit, where it forms part of the central protuberance. The chain is Large ribosomal subunit protein uL18 from Frankia casuarinae (strain DSM 45818 / CECT 9043 / HFP020203 / CcI3).